The sequence spans 458 residues: Glutamyl-tRNA reductase (458 aa).

Substrate-binding positions include 49 to 52 (TCNR), serine 111, 116 to 118 (ETE), and glutamine 122. Cysteine 50 (nucleophile) is an active-site residue. 191-196 (GAGKMS) contacts NADP(+). Composition is skewed to basic and acidic residues over residues 426-440 (IPKD…KEVE) and 448-458 (ERGHHESDFHN). Positions 426 to 458 (IPKDGEEHSSSKEVESVTQSSTERGHHESDFHN) are disordered.

Belongs to the glutamyl-tRNA reductase family. Homodimer.

The catalysed reaction is (S)-4-amino-5-oxopentanoate + tRNA(Glu) + NADP(+) = L-glutamyl-tRNA(Glu) + NADPH + H(+). Its pathway is porphyrin-containing compound metabolism; protoporphyrin-IX biosynthesis; 5-aminolevulinate from L-glutamyl-tRNA(Glu): step 1/2. In terms of biological role, catalyzes the NADPH-dependent reduction of glutamyl-tRNA(Glu) to glutamate 1-semialdehyde (GSA). This chain is Glutamyl-tRNA reductase, found in Natranaerobius thermophilus (strain ATCC BAA-1301 / DSM 18059 / JW/NM-WN-LF).